Consider the following 222-residue polypeptide: 3-dehydroquinate dehydratase (222 aa).

3-dehydroquinate is bound by residues 29-31 and Arg55; that span reads ELR. Catalysis depends on His112, which acts as the Proton donor/acceptor. Catalysis depends on Lys139, which acts as the Schiff-base intermediate with substrate. 3-dehydroquinate is bound by residues Arg178, Ser199, and Gln203.

It belongs to the type-I 3-dehydroquinase family. Homodimer.

It catalyses the reaction 3-dehydroquinate = 3-dehydroshikimate + H2O. It functions in the pathway metabolic intermediate biosynthesis; chorismate biosynthesis; chorismate from D-erythrose 4-phosphate and phosphoenolpyruvate: step 3/7. Involved in the third step of the chorismate pathway, which leads to the biosynthesis of aromatic amino acids. Catalyzes the cis-dehydration of 3-dehydroquinate (DHQ) and introduces the first double bond of the aromatic ring to yield 3-dehydroshikimate. The sequence is that of 3-dehydroquinate dehydratase from Dehalococcoides mccartyi (strain ATCC BAA-2266 / KCTC 15142 / 195) (Dehalococcoides ethenogenes (strain 195)).